The chain runs to 178 residues: Ribosome maturation factor RimM (178 aa).

The PRC barrel domain maps to 98–178 (DGEYYWNQLE…RILVDWDPEF (81 aa)).

The protein belongs to the RimM family. Binds ribosomal protein uS19.

Its subcellular location is the cytoplasm. Its function is as follows. An accessory protein needed during the final step in the assembly of 30S ribosomal subunit, possibly for assembly of the head region. Essential for efficient processing of 16S rRNA. May be needed both before and after RbfA during the maturation of 16S rRNA. It has affinity for free ribosomal 30S subunits but not for 70S ribosomes. In Cellvibrio japonicus (strain Ueda107) (Pseudomonas fluorescens subsp. cellulosa), this protein is Ribosome maturation factor RimM.